We begin with the raw amino-acid sequence, 189 residues long: Interferon alpha-6 (189 aa).

A signal peptide spans 1–23 (MARLCAFLMVLAVLSYWPTCSLG). Disulfide bonds link Cys-24/Cys-122 and Cys-52/Cys-162. An N-linked (GlcNAc...) asparagine glycan is attached at Asn-101.

Belongs to the alpha/beta interferon family.

Its subcellular location is the secreted. Its function is as follows. Produced by macrophages, IFN-alpha have antiviral activities. Interferon stimulates the production of two enzymes: a protein kinase and an oligoadenylate synthetase. This chain is Interferon alpha-6 (Ifna6), found in Mus musculus (Mouse).